The primary structure comprises 329 residues: NAD(P)H-dependent D-xylose reductase (329 aa).

Residue Y52 is the Proton donor of the active site. Residue H114 coordinates substrate. NAD(+)-binding positions include 173–174 (SN), 222–231 (SSFGPVSFLE), and 278–288 (KSSKKERLLDN).

It belongs to the aldo/keto reductase family.

It carries out the reaction xylitol + NAD(+) = D-xylose + NADH + H(+). It catalyses the reaction xylitol + NADP(+) = D-xylose + NADPH + H(+). It functions in the pathway carbohydrate metabolism; D-xylose degradation. Functionally, reduces D-xylose into xylitol. This chain is NAD(P)H-dependent D-xylose reductase (XYL1), found in Kluyveromyces lactis (strain ATCC 8585 / CBS 2359 / DSM 70799 / NBRC 1267 / NRRL Y-1140 / WM37) (Yeast).